A 331-amino-acid chain; its full sequence is C4-dicarboxylate-binding periplasmic protein DctP (331 aa).

The first 23 residues, 1-23 (MLKHTAKALVCALSLTVAGIVQA), serve as a signal peptide directing secretion.

It belongs to the bacterial solute-binding protein 7 family. In terms of assembly, the complex comprises the extracytoplasmic solute receptor protein DctP, and the two transmembrane proteins DctQ and DctM.

The protein localises to the periplasm. Its function is as follows. Part of the tripartite ATP-independent periplasmic (TRAP) transport system DctPQM involved in C4-dicarboxylates uptake. The polypeptide is C4-dicarboxylate-binding periplasmic protein DctP (Pseudomonas aeruginosa (strain ATCC 15692 / DSM 22644 / CIP 104116 / JCM 14847 / LMG 12228 / 1C / PRS 101 / PAO1)).